We begin with the raw amino-acid sequence, 466 residues long: Asparagine--tRNA ligase (466 aa).

Belongs to the class-II aminoacyl-tRNA synthetase family. As to quaternary structure, homodimer.

The protein resides in the cytoplasm. The enzyme catalyses tRNA(Asn) + L-asparagine + ATP = L-asparaginyl-tRNA(Asn) + AMP + diphosphate + H(+). The chain is Asparagine--tRNA ligase from Shigella dysenteriae serotype 1 (strain Sd197).